The chain runs to 165 residues: UPF0254 protein MmarC7_0182 (165 aa).

The protein belongs to the UPF0254 family.

In Methanococcus maripaludis (strain C7 / ATCC BAA-1331), this protein is UPF0254 protein MmarC7_0182.